Consider the following 361-residue polypeptide: Chorismate synthase (361 aa).

The NADP(+) site is built by Arg-48 and Arg-54. Residues 125-127 (RSS), 238-239 (NA), Gly-278, 293-297 (KPTSS), and Arg-319 contribute to the FMN site.

This sequence belongs to the chorismate synthase family. In terms of assembly, homotetramer. The cofactor is FMNH2.

The catalysed reaction is 5-O-(1-carboxyvinyl)-3-phosphoshikimate = chorismate + phosphate. Its pathway is metabolic intermediate biosynthesis; chorismate biosynthesis; chorismate from D-erythrose 4-phosphate and phosphoenolpyruvate: step 7/7. Its function is as follows. Catalyzes the anti-1,4-elimination of the C-3 phosphate and the C-6 proR hydrogen from 5-enolpyruvylshikimate-3-phosphate (EPSP) to yield chorismate, which is the branch point compound that serves as the starting substrate for the three terminal pathways of aromatic amino acid biosynthesis. This reaction introduces a second double bond into the aromatic ring system. The polypeptide is Chorismate synthase (Pectobacterium carotovorum subsp. carotovorum (strain PC1)).